The sequence spans 256 residues: 2-aminoethanethiol dioxygenase (256 aa).

Fe cation contacts are provided by histidine 100, histidine 102, and histidine 179.

Monomer. Fe cation serves as cofactor. As to expression, ubiquitous, with highest expression in brain, heart and skeletal muscle (at protein level).

The enzyme catalyses cysteamine + O2 = hypotaurine + H(+). It carries out the reaction N-terminal L-cysteinyl-[protein] + O2 = N-terminal S-hydroxy-S-oxy-L-cysteinyl-[protein] + H(+). Plays a vital role in regulating thiol metabolism and preserving oxygen homeostasis by oxidizing the sulfur of cysteamine and N-terminal cysteine-containing proteins to their corresponding sulfinic acids using O2 as a cosubstrate. Catalyzes the oxidation of cysteamine (2-aminoethanethiol) to hypotaurine. Catalyzes the oxidation of the regulator of G-protein signaling 5 (RGS5). Also oxidizes proteins RGS4 and interleukin-32 (IL32). This Mus musculus (Mouse) protein is 2-aminoethanethiol dioxygenase (Ado).